Reading from the N-terminus, the 396-residue chain is Tryptophan synthase beta chain (396 aa).

Lysine 86 carries the N6-(pyridoxal phosphate)lysine modification.

The protein belongs to the TrpB family. In terms of assembly, tetramer of two alpha and two beta chains. It depends on pyridoxal 5'-phosphate as a cofactor.

The enzyme catalyses (1S,2R)-1-C-(indol-3-yl)glycerol 3-phosphate + L-serine = D-glyceraldehyde 3-phosphate + L-tryptophan + H2O. The protein operates within amino-acid biosynthesis; L-tryptophan biosynthesis; L-tryptophan from chorismate: step 5/5. In terms of biological role, the beta subunit is responsible for the synthesis of L-tryptophan from indole and L-serine. This Serratia proteamaculans (strain 568) protein is Tryptophan synthase beta chain.